The following is a 142-amino-acid chain: Small ribosomal subunit protein uS9 (142 aa).

Belongs to the universal ribosomal protein uS9 family.

It is found in the cytoplasm. The polypeptide is Small ribosomal subunit protein uS9 (RPS16) (Syntrichia ruralis (Great hairy screw-moss)).